Here is a 124-residue protein sequence, read N- to C-terminus: Small ribosomal subunit protein uS12 (124 aa).

3-methylthioaspartic acid is present on D89.

This sequence belongs to the universal ribosomal protein uS12 family. Part of the 30S ribosomal subunit. Contacts proteins S8 and S17. May interact with IF1 in the 30S initiation complex.

Its function is as follows. With S4 and S5 plays an important role in translational accuracy. Interacts with and stabilizes bases of the 16S rRNA that are involved in tRNA selection in the A site and with the mRNA backbone. Located at the interface of the 30S and 50S subunits, it traverses the body of the 30S subunit contacting proteins on the other side and probably holding the rRNA structure together. The combined cluster of proteins S8, S12 and S17 appears to hold together the shoulder and platform of the 30S subunit. This chain is Small ribosomal subunit protein uS12, found in Buchnera aphidicola subsp. Schizaphis graminum (strain Sg).